Consider the following 268-residue polypeptide: Trans-aconitate 2-methyltransferase (268 aa).

The protein belongs to the methyltransferase superfamily. Tam family.

Its subcellular location is the cytoplasm. It catalyses the reaction trans-aconitate + S-adenosyl-L-methionine = (E)-3-(methoxycarbonyl)pent-2-enedioate + S-adenosyl-L-homocysteine. Catalyzes the S-adenosylmethionine monomethyl esterification of trans-aconitate. The chain is Trans-aconitate 2-methyltransferase from Delftia acidovorans (strain DSM 14801 / SPH-1).